The chain runs to 376 residues: MCQATNGPSRVVTKKHRKFFERHLQLLPSSHQGHDVNRMAIIFYSISGLSIFDVNVSAKYGDHLGWMRKHYIKTVLDDTENTVISGFVGSLVMNIPHATTINLPNTLFALLSMIMLRDYEYFETILDKRSLARFVSKCQRPDRGSFVSCLDYKTNCGSSVDSDDLRFCYIAVAILYICGCRSKEDFDEYIDTEKLLGYIMSQQCYNGAFGAHNEPHSGYTSCALSTLALLSSLEKLSDKFKEDTITWLLHRQVSSHGCMKFESELNASYDQSDDGGFQGRENKFADTCYAFWCLNSLHLLTKDWKMLCQTELVTNYLLDRTQKTLTGGFSKNDEEDADLYHSCLGSAALALIEGKFNGELCIPQEIFNDFSKRCCF.

4 PFTB repeats span residues 128-179 (KRSL…YICG), 192-231 (TEKLLGYIMSQQCYNGAFGAHNEPHSGYTSCALSTLALLS), 259-301 (MKFE…HLLT), and 310-353 (TELV…ALIE). Geranylgeranyl diphosphate is bound by residues 216–218 (HSG) and 280–283 (RENK). Zn(2+) is bound by residues Asp-286 and Cys-288. 289 to 292 (YAFW) contacts geranylgeranyl diphosphate. His-341 serves as a coordination point for Zn(2+).

It belongs to the protein prenyltransferase subunit beta family. In terms of assembly, heterodimer of an alpha (RAM2) and a beta (CDC43) subunit. Requires Zn(2+) as cofactor. Mg(2+) serves as cofactor.

The protein resides in the cytoplasm. It carries out the reaction geranylgeranyl diphosphate + L-cysteinyl-[protein] = S-geranylgeranyl-L-cysteinyl-[protein] + diphosphate. Functionally, catalyzes the transfer of a geranyl-geranyl moiety from geranyl-geranyl diphosphate to proteins having the C-terminal sequence Cys-Ile-Ile-Leu or Cys-Val-Leu-Leu. Acts, among other substrates, on Rho1 and Rho2 and CDC42 proteins. Participates in a RAS-like C-terminal modification of proteins involved in nuclear division and bud growth. It is involved in bud positioning and cell polarity. The beta subunit is responsible for isoprenoid and peptide-binding. The sequence is that of Geranylgeranyl transferase type-1 subunit beta (CDC43) from Saccharomyces cerevisiae (strain ATCC 204508 / S288c) (Baker's yeast).